The sequence spans 572 residues: EF-hand calcium-binding domain-containing protein 12 (572 aa).

2 disordered regions span residues 62–85 and 146–169; these read VPRKEDQTPLNPASQPQAPPKPIP and EQSAQPNASQATTRTTRKKAPRLS. Residues 196–231 enclose the EF-hand domain; sequence SRKIKILEIFHKVGQGENQRITREEFIAAVKAVGVP. Glu212 contributes to the Ca(2+) binding site.

This is EF-hand calcium-binding domain-containing protein 12 (EFCAB12) from Homo sapiens (Human).